Here is a 448-residue protein sequence, read N- to C-terminus: tRNA modification GTPase MnmE (448 aa).

(6S)-5-formyl-5,6,7,8-tetrahydrofolate is bound by residues Arg-24, Glu-81, and Lys-120. In terms of domain architecture, TrmE-type G spans 216-373 (GLNVVLVGAP…LKRTLLCEAG (158 aa)). Asn-226 serves as a coordination point for K(+). Residues 226-231 (NVGKSS), 245-251 (TDIAGTT), and 270-273 (DTAG) contribute to the GTP site. Ser-230 contributes to the Mg(2+) binding site. Residues Thr-245, Ile-247, and Thr-250 each coordinate K(+). A Mg(2+)-binding site is contributed by Thr-251. Lys-448 contacts (6S)-5-formyl-5,6,7,8-tetrahydrofolate.

Belongs to the TRAFAC class TrmE-Era-EngA-EngB-Septin-like GTPase superfamily. TrmE GTPase family. As to quaternary structure, homodimer. Heterotetramer of two MnmE and two MnmG subunits. The cofactor is K(+).

The protein localises to the cytoplasm. In terms of biological role, exhibits a very high intrinsic GTPase hydrolysis rate. Involved in the addition of a carboxymethylaminomethyl (cmnm) group at the wobble position (U34) of certain tRNAs, forming tRNA-cmnm(5)s(2)U34. This Neisseria gonorrhoeae (strain ATCC 700825 / FA 1090) protein is tRNA modification GTPase MnmE.